Here is a 388-residue protein sequence, read N- to C-terminus: Putative F-box protein At3g17490 (388 aa).

The 46-residue stretch at 1–46 (MMMPHLSEDLVEEILSRVPAISLKRLRYTCKQWNALFNDQRFSKKH) folds into the F-box domain.

The polypeptide is Putative F-box protein At3g17490 (Arabidopsis thaliana (Mouse-ear cress)).